Reading from the N-terminus, the 535-residue chain is Bifunctional purine biosynthesis protein PurH (535 aa).

Residues 6-151 (TRLPIRRALI…KNHKDVAIVV (146 aa)) enclose the MGS-like domain.

This sequence belongs to the PurH family.

It catalyses the reaction (6R)-10-formyltetrahydrofolate + 5-amino-1-(5-phospho-beta-D-ribosyl)imidazole-4-carboxamide = 5-formamido-1-(5-phospho-D-ribosyl)imidazole-4-carboxamide + (6S)-5,6,7,8-tetrahydrofolate. It carries out the reaction IMP + H2O = 5-formamido-1-(5-phospho-D-ribosyl)imidazole-4-carboxamide. Its pathway is purine metabolism; IMP biosynthesis via de novo pathway; 5-formamido-1-(5-phospho-D-ribosyl)imidazole-4-carboxamide from 5-amino-1-(5-phospho-D-ribosyl)imidazole-4-carboxamide (10-formyl THF route): step 1/1. It functions in the pathway purine metabolism; IMP biosynthesis via de novo pathway; IMP from 5-formamido-1-(5-phospho-D-ribosyl)imidazole-4-carboxamide: step 1/1. This is Bifunctional purine biosynthesis protein PurH from Pseudomonas entomophila (strain L48).